Reading from the N-terminus, the 381-residue chain is 1-deoxy-D-xylulose 5-phosphate reductoisomerase (381 aa).

Residues glycine 13, serine 14, isoleucine 15, asparagine 40, and asparagine 114 each contribute to the NADPH site. 1-deoxy-D-xylulose 5-phosphate is bound at residue lysine 115. Glutamate 116 lines the NADPH pocket. Aspartate 140 contributes to the Mn(2+) binding site. Positions 141, 142, 166, and 189 each coordinate 1-deoxy-D-xylulose 5-phosphate. Glutamate 142 is a Mn(2+) binding site. Glycine 195 is an NADPH binding site. 4 residues coordinate 1-deoxy-D-xylulose 5-phosphate: serine 202, asparagine 207, lysine 208, and glutamate 211. Mn(2+) is bound at residue glutamate 211.

Belongs to the DXR family. Mg(2+) is required as a cofactor. It depends on Mn(2+) as a cofactor.

The enzyme catalyses 2-C-methyl-D-erythritol 4-phosphate + NADP(+) = 1-deoxy-D-xylulose 5-phosphate + NADPH + H(+). Its pathway is isoprenoid biosynthesis; isopentenyl diphosphate biosynthesis via DXP pathway; isopentenyl diphosphate from 1-deoxy-D-xylulose 5-phosphate: step 1/6. In terms of biological role, catalyzes the NADPH-dependent rearrangement and reduction of 1-deoxy-D-xylulose-5-phosphate (DXP) to 2-C-methyl-D-erythritol 4-phosphate (MEP). The sequence is that of 1-deoxy-D-xylulose 5-phosphate reductoisomerase from Treponema denticola (strain ATCC 35405 / DSM 14222 / CIP 103919 / JCM 8153 / KCTC 15104).